We begin with the raw amino-acid sequence, 1106 residues long: Voltage-dependent calcium channel subunit alpha-2/delta-1 (1106 aa).

Positions 1–26 are cleaved as a signal peptide; the sequence is MAAGRPLAWTLTLWQAWLILIGPSSE. The Extracellular portion of the chain corresponds to 27–1076; that stretch reads EPFPSAVTIK…VLEDYTDCGG (1050 aa). A glycan (N-linked (GlcNAc...) asparagine) is linked at Asn94. Ser121 bears the Phosphoserine mark. N-linked (GlcNAc...) asparagine glycans are attached at residues Asn138 and Asn186. Positions 255–432 constitute a VWFA domain; sequence DMLILVDVSG…INTQEYLDVL (178 aa). A divalent metal cation is bound by residues Asp261, Ser263, and Ser265. Residues 261 to 265 carry the MIDAS-like motif motif; the sequence is DVSGS. N-linked (GlcNAc...) asparagine glycosylation is found at Asn326 and Asn350. Cys406 and Cys1062 are oxidised to a cystine. A Cache domain is found at 448 to 539; it reads WTNVYLDALE…QPKPIGVGIP (92 aa). 3 N-linked (GlcNAc...) asparagine glycosylation sites follow: Asn615, Asn784, and Asn891. A helical transmembrane segment spans residues 1077–1097; the sequence is VSGLNPSLWSIIGIQFVLLWL. The Cytoplasmic segment spans residues 1098-1106; sequence VSGSRHCLL.

It belongs to the calcium channel subunit alpha-2/delta family. Dimer formed of alpha-2-1 and delta-1 chains; disulfide-linked. Voltage-dependent calcium channels are multisubunit complexes, consisting of alpha-1 (CACNA1), alpha-2 (CACNA2D), beta (CACNB) and delta (CACNA2D) subunits in a 1:1:1:1 ratio. Post-translationally, proteolytically processed into subunits alpha-2-1 and delta-1 that are disulfide-linked. In terms of tissue distribution, skeletal muscle.

It is found in the membrane. The protein localises to the cell membrane. Functionally, the alpha-2/delta subunit of voltage-dependent calcium channels regulates calcium current density and activation/inactivation kinetics of the calcium channel. Plays an important role in excitation-contraction coupling. The protein is Voltage-dependent calcium channel subunit alpha-2/delta-1 (CACNA2D1) of Oryctolagus cuniculus (Rabbit).